The following is a 34-amino-acid chain: ECKYLWGTCSKDEDCCAHLGCNRKHDWCGWDYTF.

Disulfide bonds link C2/C16, C9/C21, and C15/C28.

Belongs to the neurotoxin 10 (Hwtx-1) family. 54 (ProTx-1) subfamily. As to expression, expressed by the venom gland.

It localises to the secreted. Functionally, ion channel impairing toxin that inhibits voltage-gated sodium channels. The recombinantly expressed toxin shows a weak activity against Nav1.7/SCN9A (25% inhibition at 10 uM), and shifts the voltage dependence of channel activation to more depolarized potentials. This chain is Beta/mu-theraphotoxin-Pe1a, found in Phormingochilus everetti (Malaysian purple earth tiger tarantula).